A 162-amino-acid chain; its full sequence is NADH-quinone oxidoreductase subunit I 2 (162 aa).

4Fe-4S ferredoxin-type domains lie at 52 to 82 and 93 to 122; these read LRRY…IEAG and ERYD…EGPN. The [4Fe-4S] cluster site is built by Cys62, Cys65, Cys68, Cys72, Cys102, Cys105, Cys108, and Cys112.

This sequence belongs to the complex I 23 kDa subunit family. In terms of assembly, NDH-1 is composed of 14 different subunits. Subunits NuoA, H, J, K, L, M, N constitute the membrane sector of the complex. The cofactor is [4Fe-4S] cluster.

Its subcellular location is the cell inner membrane. It carries out the reaction a quinone + NADH + 5 H(+)(in) = a quinol + NAD(+) + 4 H(+)(out). Functionally, NDH-1 shuttles electrons from NADH, via FMN and iron-sulfur (Fe-S) centers, to quinones in the respiratory chain. The immediate electron acceptor for the enzyme in this species is believed to be ubiquinone. Couples the redox reaction to proton translocation (for every two electrons transferred, four hydrogen ions are translocated across the cytoplasmic membrane), and thus conserves the redox energy in a proton gradient. The chain is NADH-quinone oxidoreductase subunit I 2 from Rhodopseudomonas palustris (strain BisA53).